The sequence spans 139 residues: Peptide methionine sulfoxide reductase MsrB (139 aa).

Residues 8–130 enclose the MsrB domain; sequence DQEWRQQLTD…NSASLRFHSA (123 aa). Zn(2+)-binding residues include C47, C50, C96, and C99. The active-site Nucleophile is C119.

It belongs to the MsrB Met sulfoxide reductase family. Requires Zn(2+) as cofactor.

It catalyses the reaction L-methionyl-[protein] + [thioredoxin]-disulfide + H2O = L-methionyl-(R)-S-oxide-[protein] + [thioredoxin]-dithiol. This Hahella chejuensis (strain KCTC 2396) protein is Peptide methionine sulfoxide reductase MsrB.